The primary structure comprises 301 residues: Phosphate transport system permease protein PstA 2 (301 aa).

A run of 6 helical transmembrane segments spans residues 36–56 (ACVC…IGVV), 83–103 (IIGT…VSVL), 127–147 (LSGI…VVYF), 149–169 (WGFS…PYIA), 209–229 (GIVT…APLL), and 274–294 (ALLL…INWL). The region spanning 83–288 (IIGTAVLAIG…VFLLLLIFIG (206 aa)) is the ABC transmembrane type-1 domain.

This sequence belongs to the binding-protein-dependent transport system permease family. CysTW subfamily.

The protein resides in the cell membrane. In terms of biological role, part of the binding-protein-dependent transport system for phosphate; probably responsible for the translocation of the substrate across the membrane. This is Phosphate transport system permease protein PstA 2 (pstA2) from Mycobacterium bovis (strain ATCC BAA-935 / AF2122/97).